Here is a 262-residue protein sequence, read N- to C-terminus: PsbP domain-containing protein 6, chloroplastic (262 aa).

C128 and C132 are oxidised to a cystine.

Belongs to the PsbP family.

It is found in the plastid. The protein localises to the chloroplast thylakoid lumen. Functionally, may be involved in the redox regulation of photosystem II. In Arabidopsis thaliana (Mouse-ear cress), this protein is PsbP domain-containing protein 6, chloroplastic (PPD6).